Reading from the N-terminus, the 153-residue chain is Endoribonuclease YbeY (153 aa).

Zn(2+) contacts are provided by H116, H120, and H126.

Belongs to the endoribonuclease YbeY family. Zn(2+) serves as cofactor.

The protein resides in the cytoplasm. Functionally, single strand-specific metallo-endoribonuclease involved in late-stage 70S ribosome quality control and in maturation of the 3' terminus of the 16S rRNA. This Clavibacter michiganensis subsp. michiganensis (strain NCPPB 382) protein is Endoribonuclease YbeY.